Consider the following 849-residue polypeptide: DNA mismatch repair protein MutS (849 aa).

An ATP-binding site is contributed by 665 to 672; sequence GPNMAGKS.

The protein belongs to the DNA mismatch repair MutS family.

This protein is involved in the repair of mismatches in DNA. It is possible that it carries out the mismatch recognition step. This protein has a weak ATPase activity. The chain is DNA mismatch repair protein MutS from Wolbachia pipientis wMel.